The primary structure comprises 620 residues: Protein VERNALIZATION INSENSITIVE 3 (620 aa).

Residues 148 to 206 form a PHD-type zinc finger; that stretch reads RCSCCICQKFDDNKDPSLWLTCDACGSSCHLECGLKQDRYGIGSDDLDGRFYCAYCGKD. The Nuclear localization signal motif lies at 213-220; sequence WRKQVKVA. Residues 314–412 enclose the Fibronectin type-III domain; it reads DKMTVRVEEI…ELRFTTLKDD (99 aa). Residues 411 to 466 are disordered; it reads DDGDEAGDQQSPLTNSSSGLCSNPSLPEDESNNVNKSCSKGNGDKDNTEHCSAGEV. Residues 418 to 435 are compositionally biased toward polar residues; it reads DQQSPLTNSSSGLCSNPS. The Nuclear localization signal motif lies at 493-500; it reads CKRDIYKG. Positions 512–620 are VIN3-Interacting Domain (VID); the sequence is TVSLNEKPEI…PAGICLKLWH (109 aa).

In terms of assembly, interacts with VIL1 and VIL2. The heterodimer made of VIN3 and VIL1 is required for establishing the vernalization-induced epigenetic silencing of FLC. Component of the plant homeodomain / polycomb repressive complex 2 (PHD-PRC2) large complex during prolonged cold, composed of core PRC2 components (VRN2, EZA1, FIE and MSI1), and three related PHD finger proteins (VIL1, VIL2 and VIN3) that mediates histone H3 trimethylation on 'Lys-27' (H3K27me3). Expressed in shoot and root apices. Displays the same pattern of expression as FLC.

The protein resides in the nucleus. The protein localises to the nucleus speckle. Functionally, plays a central role in vernalization by mediating the initial transcriptional repression of the homeotic gene FLC, a floral repressor, after a cold treatment. However, due to its transient expression, it cannot maintain repression of FLC, which is then maintained by Polycomb Group complexes containing VRN2 throughout development. Required to deacetylate histones on the FLC promoter. Together with VIL1, required during vernalization for the modifications of FLC and FLM chromatin that are associated with an epigenetically silenced state (e.g. chromatin modifications, histone deacetylation, and trimethylated H3 'Lys-4' H3K4me3 and 'Lys-27' H3K27me3) and with acquisition of competence to flower. The protein is Protein VERNALIZATION INSENSITIVE 3 (VIN3) of Arabidopsis thaliana (Mouse-ear cress).